Here is a 702-residue protein sequence, read N- to C-terminus: Methionine--tRNA ligase (702 aa).

Residues 14–24 carry the 'HIGH' region motif; the sequence is PYANGPVHLGH. Zn(2+)-binding residues include cysteine 146, cysteine 149, cysteine 159, and cysteine 162. Positions 344–348 match the 'KMSKS' region motif; sequence KFSKS. Lysine 347 provides a ligand contact to ATP. The 102-residue stretch at 601-702 folds into the tRNA-binding domain; the sequence is DFQKVDLRVA…GEKINGQSVQ (102 aa).

It belongs to the class-I aminoacyl-tRNA synthetase family. MetG type 1 subfamily. In terms of assembly, homodimer. Requires Zn(2+) as cofactor.

The protein resides in the cytoplasm. The enzyme catalyses tRNA(Met) + L-methionine + ATP = L-methionyl-tRNA(Met) + AMP + diphosphate. Functionally, is required not only for elongation of protein synthesis but also for the initiation of all mRNA translation through initiator tRNA(fMet) aminoacylation. The polypeptide is Methionine--tRNA ligase (Chlorobium luteolum (strain DSM 273 / BCRC 81028 / 2530) (Pelodictyon luteolum)).